The primary structure comprises 258 residues: DNA-directed RNA polymerase subunit Rpo3 (258 aa).

The protein belongs to the archaeal Rpo3/eukaryotic RPB3 RNA polymerase subunit family. In terms of assembly, part of the RNA polymerase complex.

It localises to the cytoplasm. The enzyme catalyses RNA(n) + a ribonucleoside 5'-triphosphate = RNA(n+1) + diphosphate. Its function is as follows. DNA-dependent RNA polymerase (RNAP) catalyzes the transcription of DNA into RNA using the four ribonucleoside triphosphates as substrates. In Pyrobaculum calidifontis (strain DSM 21063 / JCM 11548 / VA1), this protein is DNA-directed RNA polymerase subunit Rpo3.